We begin with the raw amino-acid sequence, 71 residues long: Small ribosomal subunit protein bS21 (71 aa).

The disordered stretch occupies residues 37 to 71 (HYEKPTAERKRKKAAAVKRHMKKLSRDNARRVKLY). Residues 45 to 59 (RKRKKAAAVKRHMKK) are compositionally biased toward basic residues. Positions 60–71 (LSRDNARRVKLY) are enriched in basic and acidic residues.

The protein belongs to the bacterial ribosomal protein bS21 family.

The chain is Small ribosomal subunit protein bS21 from Pseudoalteromonas translucida (strain TAC 125).